The following is a 229-amino-acid chain: Lipoprotein-releasing system ATP-binding protein LolD (229 aa).

The ABC transporter domain maps to 6–229 (LELDAIERTY…DGHLTPYVPA (224 aa)). An ATP-binding site is contributed by 42 to 49 (GPSGSGKS).

This sequence belongs to the ABC transporter superfamily. Lipoprotein translocase (TC 3.A.1.125) family. The complex is composed of two ATP-binding proteins (LolD) and two transmembrane proteins (LolC and LolE).

The protein localises to the cell inner membrane. Its function is as follows. Part of the ABC transporter complex LolCDE involved in the translocation of mature outer membrane-directed lipoproteins, from the inner membrane to the periplasmic chaperone, LolA. Responsible for the formation of the LolA-lipoprotein complex in an ATP-dependent manner. The polypeptide is Lipoprotein-releasing system ATP-binding protein LolD (Maricaulis maris (strain MCS10) (Caulobacter maris)).